Consider the following 27-residue polypeptide: GFGSLFKFLGKKLAKTVAKQAAKKQME.

In terms of tissue distribution, expressed by the venom gland.

The protein resides in the secreted. This is Cupiennin-3c from Cupiennius salei (American wandering spider).